We begin with the raw amino-acid sequence, 86 residues long: uncharacterized protein (86 aa).

The protein localises to the mitochondrion. This is an uncharacterized protein from Marchantia polymorpha (Common liverwort).